Consider the following 2522-residue polypeptide: MYRIGLLVLIWSLLGLAQGLRCTQTAEMCLNGGRCEMTPGGTGVCLCSSSYFGERCQYPNPCALKNQCMNFGTCEPVLLGNAIDFTCHCPVGFTDKVCLTPVDNACVNNPCRNGGTCELLSSVSDYRCRCPPGWTGDSCQQADPCASNPCANGGKCLPFETQYICKCPSGFHGATCKQDINECSQNPCRNGGQCLNEFGSYRCNCQNRFTGRNCEEPYVPCNPSPCLNGGTCRQTDDTSYECTCLPGFSGQNCEENIDDCPSNNCRNGGTCVDGVNTYNCQCPPDWTGQYCTEDVDECQLMPNACQNGGTCHNTYGGYNCVCVNGWTGEDCSENIDDCANAACHSGATCHDRVASFFCECPHGRTGLLCHLDNACISNPCNEGSNCDTNPVNGKAICTCPPGYTGPACNNDVDECSLGANPCEHGGRCTNTLGSFQCNCPQGYAGPRCEIDVNECLSNPCQNDATCLDQIGEFQCICMPGYEGLYCETNIDECASNPCLHNGKCVDKINEFHCECPTGFNGNLCQHDVDECASTPCKNGAKCLDGPNSYTCQCTEGFTGRHCEQDINECIPDPCHYGTCKDGIATFTCLCRPGYTGRLCDNDINECLSQPCQNGGQCTDRENGYICTCPKGTTGVNCETNLDDCASNPCDYGKCIDKIDGYECTCEPGYTGKMCNINIDECASNPCRNGGTCKDKINGFTCVCPDGYHDHMCLSEVNECNSNPCIHGTCHDGINGYKCDCDAGWSGSNCDVNNNECESNPCMNGGTCKDMTGAYICTCRAGFSGPNCQTNINECASNPCLNRGTCIDDVAGYKCNCMLPYTGAICEAVLAPCSGSPCKNGGRCKESEDYETFSCECPPGWQGQTCEIDMNECVNRPCRNGAMCQNTNGSYKCNCKPGYAGRHCETDIDDCQPNPCHNGGSCSDGINMFFCNCPAGFRGPKCEEDINECASNPCKNGANCTDCVNSYTCTCQPGFSGIHCENNTPDCTESSCFNGGTCIDGINTFSCQCPPGFTGNYCQHDINECDSKPCLNGGTCQDSYGAYKCTCPQGYTGLNCQNLVRWCDSSPCKNGGKCWQTNNFYRCECKSGWTGVYCDVPSVSCEVAAKQQGVDIAHLCRNSGMCVDTGNTHFCRCQAGYTGSYCEEQVDECSPNPCQNGATCTDYLGGYSCECVAGYHGVNCSEEINECLSHPCHNGGTCIDLINTYKCSCPRGTQGVHCEINVDDCTPFYDSVSLEPKCFNNGKCFDRVGGYNCICPPGFVGERCEGDVNECLSNPCDPRGTQNCIQLVNDYRCECRQGFTGRRCDSVVDGCKGLPCRNGGTCAVASNTERGFICKCPPGFDGATCEYDARTCGNLRCQNGGTCISVLKSSKCVCSEGYTGATCQYPVVSPCASRPCYNGGTCQFSPEEPFFQCFCPTNFNGLFCHILDYGFIGGLGKNITPPDNEEICENEQCAELADNKICNANCNNHACGWDGGDCSLNFNDPWKNCTQSLQCWKYFNDGKCDSQCNNSGCLYDGFDCQKVEVQCNPLYDQYCRDHFQDGHCDQGCNNAECEWDGLDCDNMPENLAEGTLLIVVLMPPEKLKNNSVNFLRELSRVLHTNVVFKKDSKGEYKIYPYYGNEEELKKHHIKKRSAASWSDAPTAIFSTMKESVLPGRRRRELDQMEVRGSIVYLEIDNRQCYKSSSQCFTSATDVAAFLGALATHGNLNIPYKIEAVKSEIVETAKPPPPLYAMFSMLVIPLLIIFVIMVVIVNKKRRREHGQLWFPEGFIPKEPSKKKRREPLGEDSVGLKPLKNLTDGSFMDDNQNEWGDEETLENKRFRFEEQVMLPELVDDQTDHRQWTQQHLDAADLRIPSMAPTPPQGEIDADCMDVNVRGPDGFTPLMIAACSGGGLETGNSEEEEDASANMISDFIGQGAQLHNQTDRTGETALHLAARYARADAAKRLLESSADANVPDNMGRTPLHAAVAADAQGVFQILIRNRATDLDARMCDGTTPLILAARLAVEGMVEELINAHADVNAVDEFGKSALHWAAAVNNVDAAAVLLKSSANKDMQNNKEETPLFLAAREGSYETAKVLLDHYANRDITDHMDRLPRDIAQERMHHDIVHLLDEHNLVKSPTLHGGPLGAPTLSPPICSPNGYMGNMKPSVQSKKARKPSIKGNGCKEAKELKARRKKSQDGKTSLLDSGSSGVLSPVDSLESPHGYLSDVASPPLMTSPFQQSPSMPLNHLTSMQDSHLGLNHMTMANKQEMASNRMAFDGMTPRLTHLNVSSPNTIMTNGSMHFTVGGAPAMNGQCDWFARLQNGMVQNQYNPIRNGIQQGNAQQALQHGLMSSLHNGLPATTLSQMMTYQAMPNTRMANQPHLMQAQQMQQQQNLQLHQSVQQQQHQNSNATSTHIGSPFCSNDISQTDLQQMSGNNIHSVMPQDTQIFTNSLPPTLTQSMATTQFLTPPSQHSYSSPMDNTPSHQLQVPDHPFLTPSPESPDQWSSSSPHSNMSDWSEGISSPPTSMQPQRTHIPEAFK.

An N-terminal signal peptide occupies residues 1–19; the sequence is MYRIGLLVLIWSLLGLAQG. 4 EGF-like domains span residues 20-57, 58-99, 102-140, and 141-177; these read LRCT…ERCQ, YPNP…KVCL, VDNA…DSCQ, and QADP…ATCK. At 20 to 1730 the chain is on the extracellular side; it reads LRCTQTAEMC…ETAKPPPPLY (1711 aa). 33 disulfide bridges follow: cysteine 22/cysteine 35, cysteine 29/cysteine 45, cysteine 47/cysteine 56, cysteine 62/cysteine 74, cysteine 68/cysteine 87, cysteine 89/cysteine 98, cysteine 106/cysteine 117, cysteine 111/cysteine 128, cysteine 130/cysteine 139, cysteine 145/cysteine 156, cysteine 150/cysteine 165, cysteine 167/cysteine 176, cysteine 183/cysteine 194, cysteine 188/cysteine 203, cysteine 205/cysteine 214, cysteine 221/cysteine 232, cysteine 226/cysteine 242, cysteine 244/cysteine 253, cysteine 260/cysteine 271, cysteine 265/cysteine 280, cysteine 282/cysteine 291, cysteine 298/cysteine 311, cysteine 305/cysteine 320, cysteine 322/cysteine 331, cysteine 338/cysteine 349, cysteine 343/cysteine 358, cysteine 360/cysteine 369, cysteine 375/cysteine 386, cysteine 380/cysteine 397, cysteine 399/cysteine 408, cysteine 415/cysteine 428, cysteine 422/cysteine 437, and cysteine 439/cysteine 448. Positions 179–215 constitute an EGF-like 5; calcium-binding domain; the sequence is DINECSQNPCRNGGQCLNEFGSYRCNCQNRFTGRNCE. One can recognise an EGF-like 6 domain in the interval 217-254; it reads PYVPCNPSPCLNGGTCRQTDDTSYECTCLPGFSGQNCE. O-linked (Fuc...) threonine; alternate glycosylation is present at threonine 231. Residue threonine 231 is glycosylated (O-linked (GalNAc...) threonine; alternate). Residues 256 to 292 form the EGF-like 7; calcium-binding domain; that stretch reads NIDDCPSNNCRNGGTCVDGVNTYNCQCPPDWTGQYCT. In terms of domain architecture, EGF-like 8; calcium-binding spans 294 to 332; sequence DVDECQLMPNACQNGGTCHNTYGGYNCVCVNGWTGEDCS. In terms of domain architecture, EGF-like 9; calcium-binding spans 334–370; the sequence is NIDDCANAACHSGATCHDRVASFFCECPHGRTGLLCH. Residues 371–409 form the EGF-like 10 domain; the sequence is LDNACISNPCNEGSNCDTNPVNGKAICTCPPGYTGPACN. The EGF-like 11; calcium-binding domain maps to 411 to 449; that stretch reads DVDECSLGANPCEHGGRCTNTLGSFQCNCPQGYAGPRCE. Residues threonine 431 and serine 434 each contribute to the Ca(2+) site. A glycan (O-linked (Glc...) serine) is linked at serine 434. 3 residues coordinate Ca(2+): aspartate 451, valine 452, and glutamate 454. Residues 451–487 enclose the EGF-like 12; calcium-binding domain; the sequence is DVNECLSNPCQNDATCLDQIGEFQCICMPGYEGLYCE. Intrachain disulfides connect cysteine 455–cysteine 466, cysteine 460–cysteine 475, and cysteine 477–cysteine 486. A glycan (O-linked (Glc...) serine) is linked at serine 457. A glycan (O-linked (Fuc...) threonine) is linked at threonine 465. Positions 468 and 469 each coordinate Ca(2+). The Ca(2+) site is built by asparagine 489, isoleucine 490, and glutamate 492. Residues 489 to 525 form the EGF-like 13; calcium-binding domain; it reads NIDECASNPCLHNGKCVDKINEFHCECPTGFNGNLCQ. Intrachain disulfides connect cysteine 493-cysteine 504, cysteine 498-cysteine 513, cysteine 515-cysteine 524, cysteine 531-cysteine 542, cysteine 536-cysteine 551, cysteine 553-cysteine 562, cysteine 569-cysteine 579, cysteine 574-cysteine 588, cysteine 590-cysteine 599, cysteine 606-cysteine 617, cysteine 611-cysteine 626, cysteine 628-cysteine 637, cysteine 644-cysteine 654, cysteine 649-cysteine 663, cysteine 665-cysteine 674, cysteine 681-cysteine 692, cysteine 686-cysteine 701, cysteine 703-cysteine 712, cysteine 719-cysteine 729, cysteine 724-cysteine 738, cysteine 740-cysteine 749, cysteine 756-cysteine 767, cysteine 761-cysteine 776, cysteine 778-cysteine 787, cysteine 794-cysteine 805, cysteine 799-cysteine 814, cysteine 816-cysteine 825, cysteine 832-cysteine 843, cysteine 837-cysteine 854, cysteine 856-cysteine 865, cysteine 872-cysteine 883, cysteine 877-cysteine 892, cysteine 894-cysteine 903, cysteine 910-cysteine 921, cysteine 915-cysteine 930, cysteine 932-cysteine 941, cysteine 948-cysteine 959, cysteine 953-cysteine 968, cysteine 970-cysteine 979, cysteine 986-cysteine 997, cysteine 991-cysteine 1006, cysteine 1008-cysteine 1017, cysteine 1024-cysteine 1035, cysteine 1029-cysteine 1044, cysteine 1046-cysteine 1055, cysteine 1062-cysteine 1073, cysteine 1067-cysteine 1082, cysteine 1084-cysteine 1093, cysteine 1100-cysteine 1121, cysteine 1115-cysteine 1130, cysteine 1132-cysteine 1141, cysteine 1148-cysteine 1159, cysteine 1153-cysteine 1168, cysteine 1170-cysteine 1179, cysteine 1186-cysteine 1197, cysteine 1191-cysteine 1206, cysteine 1208-cysteine 1217, cysteine 1224-cysteine 1243, cysteine 1237-cysteine 1252, cysteine 1254-cysteine 1263, cysteine 1270-cysteine 1283, cysteine 1275-cysteine 1292, cysteine 1294-cysteine 1303, cysteine 1310-cysteine 1321, cysteine 1315-cysteine 1333, cysteine 1335-cysteine 1344, cysteine 1351-cysteine 1362, cysteine 1356-cysteine 1371, cysteine 1373-cysteine 1382, cysteine 1390-cysteine 1401, cysteine 1395-cysteine 1412, cysteine 1414-cysteine 1423, cysteine 1447-cysteine 1470, cysteine 1452-cysteine 1465, and cysteine 1461-cysteine 1477. Serine 495 is a glycosylation site (O-linked (Glc...) serine). Residues aspartate 506 and lysine 507 each contribute to the Ca(2+) site. The EGF-like 14; calcium-binding domain maps to 527–563; the sequence is DVDECASTPCKNGAKCLDGPNSYTCQCTEGFTGRHCE. The 36-residue stretch at 565–600 folds into the EGF-like 15; calcium-binding domain; it reads DINECIPDPCHYGTCKDGIATFTCLCRPGYTGRLCD. One can recognise an EGF-like 16; calcium-binding domain in the interval 602-638; it reads DINECLSQPCQNGGQCTDRENGYICTCPKGTTGVNCE. The EGF-like 17; calcium-binding domain maps to 640–675; that stretch reads NLDDCASNPCDYGKCIDKIDGYECTCEPGYTGKMCN. The 37-residue stretch at 677–713 folds into the EGF-like 18; calcium-binding domain; sequence NIDECASNPCRNGGTCKDKINGFTCVCPDGYHDHMCL. The EGF-like 19; calcium-binding domain occupies 715–750; it reads EVNECNSNPCIHGTCHDGINGYKCDCDAGWSGSNCD. Positions 752-788 constitute an EGF-like 20; calcium-binding domain; it reads NNNECESNPCMNGGTCKDMTGAYICTCRAGFSGPNCQ. Positions 790–826 constitute an EGF-like 21; calcium-binding domain; it reads NINECASNPCLNRGTCIDDVAGYKCNCMLPYTGAICE. The region spanning 828–866 is the EGF-like 22 domain; the sequence is VLAPCSGSPCKNGGRCKESEDYETFSCECPPGWQGQTCE. The EGF-like 23; calcium-binding domain maps to 868–904; sequence DMNECVNRPCRNGAMCQNTNGSYKCNCKPGYAGRHCE. A glycan (N-linked (GlcNAc...) asparagine) is linked at asparagine 887. In terms of domain architecture, EGF-like 24; calcium-binding spans 906 to 942; it reads DIDDCQPNPCHNGGSCSDGINMFFCNCPAGFRGPKCE. Positions 944–980 constitute an EGF-like 25; calcium-binding domain; the sequence is DINECASNPCKNGANCTDCVNSYTCTCQPGFSGIHCE. Asparagine 958 is a glycosylation site (N-linked (GlcNAc...) asparagine). The EGF-like 26 domain occupies 982-1018; sequence NTPDCTESSCFNGGTCIDGINTFSCQCPPGFTGNYCQ. Residues 1020–1056 form the EGF-like 27; calcium-binding domain; the sequence is DINECDSKPCLNGGTCQDSYGAYKCTCPQGYTGLNCQ. EGF-like domains lie at 1058–1094 and 1096–1142; these read LVRW…VYCD and PSVS…SYCE. One can recognise an EGF-like 30; calcium-binding domain in the interval 1144 to 1180; sequence QVDECSPNPCQNGATCTDYLGGYSCECVAGYHGVNCS. An N-linked (GlcNAc...) asparagine glycan is attached at asparagine 1178. Positions 1182-1218 constitute an EGF-like 31; calcium-binding domain; that stretch reads EINECLSHPCHNGGTCIDLINTYKCSCPRGTQGVHCE. In terms of domain architecture, EGF-like 32; calcium-binding spans 1220 to 1264; it reads NVDDCTPFYDSVSLEPKCFNNGKCFDRVGGYNCICPPGFVGERCE. EGF-like domains lie at 1266-1304, 1306-1345, 1347-1383, and 1386-1424; these read DVNE…RRCD, VVDG…ATCE, DART…ATCQ, and VVSP…LFCH. Threonine 1400 carries O-linked (Fuc...) threonine; alternate glycosylation. O-linked (GalNAc...) threonine; alternate glycosylation is present at threonine 1400. LNR repeat units lie at residues 1447–1487, 1488–1529, and 1530–1564; these read CENE…PWKN, CTQS…CNPL, and YDQY…NMPE. Ca(2+)-binding residues include asparagine 1458, aspartate 1473, and aspartate 1476. N-linked (GlcNAc...) asparagine glycosylation is present at asparagine 1487. 5 disulfides stabilise this stretch: cysteine 1488/cysteine 1512, cysteine 1494/cysteine 1507, cysteine 1503/cysteine 1519, cysteine 1534/cysteine 1547, and cysteine 1543/cysteine 1559. Aspartate 1500 contributes to the Ca(2+) binding site. An N-linked (GlcNAc...) asparagine glycan is attached at asparagine 1508. Ca(2+) is bound by residues aspartate 1515, aspartate 1518, aspartate 1540, aspartate 1555, and aspartate 1558. Asparagine 1584 carries N-linked (GlcNAc...) asparagine glycosylation. The chain crosses the membrane as a helical span at residues 1731 to 1751; sequence AMFSMLVIPLLIIFVIMVVIV. Topologically, residues 1752 to 2522 are cytoplasmic; that stretch reads NKKRRREHGQ…QRTHIPEAFK (771 aa). 6 ANK repeats span residues 1877-1920, 1925-1954, 1958-1988, 1992-2021, 2025-2054, and 2058-2087; these read DGFT…QLHN, TGET…DANV, MGRT…DLDA, DGTT…DVNA, FGKS…NKDM, and KEET…NRDI. Disordered regions lie at residues 2146–2229, 2365–2404, and 2449–2522; these read MKPS…MPLN, LMQA…PFCS, and LTPP…EAFK. The segment covering 2184 to 2200 has biased composition (low complexity); that stretch reads SLLDSGSSGVLSPVDSL. The segment covering 2218–2229 has biased composition (polar residues); it reads SPFQQSPSMPLN. The span at 2365–2390 shows a compositional bias: low complexity; the sequence is LMQAQQMQQQQNLQLHQSVQQQQHQN. Composition is skewed to polar residues over residues 2391-2404 and 2449-2469; these read SNAT…PFCS and LTPP…SHQL. Positions 2479 to 2494 are enriched in low complexity; it reads PSPESPDQWSSSSPHS. Residues 2495–2514 are compositionally biased toward polar residues; it reads NMSDWSEGISSPPTSMQPQR.

Belongs to the NOTCH family. In terms of processing, O-glycosylated on the EGF-like domains. Contains both O-linked fucose and O-linked glucose. O-linked glycosylation by galnt11 is involved in determination of left/right symmetry: glycosylation promotes activation of notch1, possibly by promoting cleavage by adam17, modulating the balance between motile and immotile (sensory) cilia at the left-right organiser (LRO). Synthesized in the endoplasmic reticulum as an inactive form which is proteolytically cleaved by a furin-like convertase in the trans-Golgi network before it reaches the plasma membrane to yield an active, ligand-accessible form. Cleavage results in a C-terminal fragment N(TM) and a N-terminal fragment N(EC). Following ligand binding, it is cleaved by adam17 to yield a membrane-associated intermediate fragment called notch extracellular truncation (NEXT). Following endocytosis, this fragment is then cleaved by presenilin dependent gamma-secretase to release a Notch-derived peptide containing the intracellular domain (NICD) from the membrane.

The protein localises to the cell membrane. It localises to the nucleus. Its function is as follows. Functions as a receptor for membrane-bound ligands Jagged-1 (JAG1), Jagged-2 (JAG2) and Delta-1 (DLL1) to regulate cell-fate determination. Upon ligand activation through the released notch intracellular domain (NICD) it forms a transcriptional activator complex with RBPJ/RBPSUH and activates genes of the enhancer of split locus. Affects the implementation of differentiation, proliferation and apoptotic programs. Involved in angiogenesis; negatively regulates endothelial cell proliferation and migration and angiogenic sprouting. Involved in the maturation of both CD4(+) and CD8(+) cells in the thymus. Important for follicular differentiation and possibly cell fate selection within the follicle. During cerebellar development, functions as a receptor for neuronal DNER and is involved in the differentiation of Bergmann glia. Represses neuronal and myogenic differentiation. May play an essential role in postimplantation development, probably in some aspect of cell specification and/or differentiation. May be involved in mesoderm development, somite formation and neurogenesis. Involved in determination of left/right symmetry by modulating the balance between motile and immotile (sensory) cilia at the left-right organiser (LRO). This is Neurogenic locus notch homolog protein 1 (notch1) from Xenopus tropicalis (Western clawed frog).